Reading from the N-terminus, the 207-residue chain is Transcriptional regulatory protein RcsA (207 aa).

The HTH luxR-type domain occupies 131-196; the sequence is LTLPTLSLSK…VIYHIVRLTE (66 aa). The segment at residues 155–174 is a DNA-binding region (H-T-H motif); sequence TSQISTQMNIKAKTVSSHKG.

The protein belongs to the RcsA family.

Functionally, component of the Rcs signaling system, which controls transcription of numerous genes. Binds to DNA to regulate expression of genes. This chain is Transcriptional regulatory protein RcsA, found in Klebsiella aerogenes (Enterobacter aerogenes).